A 491-amino-acid chain; its full sequence is UDP-N-acetylmuramoyl-L-alanyl-D-glutamate--2,6-diaminopimelate ligase (491 aa).

Ser-30 lines the UDP-N-acetyl-alpha-D-muramoyl-L-alanyl-D-glutamate pocket. Position 108-114 (108-114 (GTNGKTT)) interacts with ATP. Residues Asn-149, 150 to 151 (TT), Ser-177, Gln-183, and Arg-185 contribute to the UDP-N-acetyl-alpha-D-muramoyl-L-alanyl-D-glutamate site. At Lys-217 the chain carries N6-carboxylysine. Meso-2,6-diaminopimelate is bound by residues Arg-383, 407-410 (DNPR), Gly-458, and Glu-462. The Meso-diaminopimelate recognition motif signature appears at 407–410 (DNPR).

Belongs to the MurCDEF family. MurE subfamily. Mg(2+) is required as a cofactor. Carboxylation is probably crucial for Mg(2+) binding and, consequently, for the gamma-phosphate positioning of ATP.

The protein localises to the cytoplasm. It carries out the reaction UDP-N-acetyl-alpha-D-muramoyl-L-alanyl-D-glutamate + meso-2,6-diaminopimelate + ATP = UDP-N-acetyl-alpha-D-muramoyl-L-alanyl-gamma-D-glutamyl-meso-2,6-diaminopimelate + ADP + phosphate + H(+). The protein operates within cell wall biogenesis; peptidoglycan biosynthesis. In terms of biological role, catalyzes the addition of meso-diaminopimelic acid to the nucleotide precursor UDP-N-acetylmuramoyl-L-alanyl-D-glutamate (UMAG) in the biosynthesis of bacterial cell-wall peptidoglycan. This Listeria monocytogenes serotype 4b (strain F2365) protein is UDP-N-acetylmuramoyl-L-alanyl-D-glutamate--2,6-diaminopimelate ligase.